Consider the following 117-residue polypeptide: NLIDFKNMIKCTTKRSVLDFADYGCYCGSGGSGTPVDDLDRCCKVHDDCYGEAEKVHGCWPKWTLYSYDCSNGQLTCKDNNTKCKDFVCNCDRTAAICFAKAPYDDNNFMINNPRCQ.

Cystine bridges form between C11–C70, C25–C116, C27–C43, C42–C98, C49–C91, C59–C84, and C77–C89. Positions 26, 28, and 30 each coordinate Ca(2+). H46 is an active-site residue. D47 contributes to the Ca(2+) binding site. N80 is a glycosylation site (N-linked (GlcNAc...) asparagine). D92 is a catalytic residue.

It depends on Ca(2+) as a cofactor. Expressed by the venom gland.

The protein resides in the secreted. The catalysed reaction is a 1,2-diacyl-sn-glycero-3-phosphocholine + H2O = a 1-acyl-sn-glycero-3-phosphocholine + a fatty acid + H(+). In terms of biological role, snake venom phospholipase A2 (PLA2) that shows strong myotoxicity and induces edema in mice. Shows no cytotoxicity in vitro. Has a strong anticoagulant effect in vitro. PLA2 catalyzes the calcium-dependent hydrolysis of the 2-acyl groups in 3-sn-phosphoglycerides. This Micrurus dumerilii (Coral snake) protein is Acidic phospholipase A2.